A 572-amino-acid polypeptide reads, in one-letter code: Transducin-like enhancer protein 6 (572 aa).

Disordered stretches follow at residues 1 to 30 (MTSR…SSPT), 92 to 121 (QSEE…SSFE), and 174 to 236 (KAKP…VQEP). Over residues 14–30 (KSTSPCPGISNSESSPT) the composition is skewed to polar residues. WD repeat units lie at residues 284–322 (AHGE…AEDR), 332–372 (TPGA…LHVK), 377–416 (CAGL…VVRD), 419–456 (GYPD…KPLE), 458–497 (QFKS…RHMV), 499–538 (QKDS…KVFE), and 540–571 (PEMS…YQIT). Ser510 is subject to Phosphoserine; by PKA.

The protein belongs to the WD repeat Groucho/TLE family. As to quaternary structure, homodimers. Component of the subcortical maternal complex (SCMC), at least composed of NLRP5, KHDC3, OOEP, and TLE6. Within the complex, interacts with NLRP5, KHDC3 and OOEP. The SCMC may facilitate translocation of its components between the nuclear and cytoplasmic compartments. As part of the SCMC interacts with the SCMC-associated protein ZBED3. As part of the SCMC interacts with the SCMC-associated protein NLRP4F. As part of the SCMC interacts with the SCMC-associated protein CFL1/Cofilin-1. Interacts with FOXG1/BF-1; the interaction inhibits TLE1 interaction with FOXG1/BF-1. Interacts with NFATC1. Interacts with PAX6. Component of the subcortical maternal complex (SCMC), at least composed of NLRP5, KHDC3L, OOEP, and TLE6 isoform 1. Within the complex, interacts with NLRP5, KHDC3L and OOEP. The SCMC may facilitate translocation of its components between the nuclear and cytoplasmic compartments.

The protein resides in the cytoplasm. It is found in the nucleus. Functionally, component of the subcortical maternal complex (SCMC), a multiprotein complex that plays a key role in early embryonic development. The SCMC complex is a structural constituent of cytoplasmic lattices, which consist in fibrous structures found in the cytoplasm of oocytes and preimplantation embryos. They are required to store maternal proteins critical for embryonic development, such as proteins that control epigenetic reprogramming of the preimplantation embryo, and prevent their degradation or activation. Also required for spermatogenesis: regulates spermatogonia proliferation and cell cycle progression, potentially via regulation of cell cycle regulatory genes such as; CEBPB, CEBPA, CSF3, PCNA, and CDK4. Suppresses FOXG1/BF-1-mediated transcriptional repression by inhibiting interaction of the transcriptional corepressor TLE1 with FOXG1 which promotes cortical neuron differentiation. Acts as a transcriptional corepressor of NFATC1-mediated gene expression by contributing to PAX6-mediated repression. In terms of biological role, component of the subcortical maternal complex (SCMC), a multiprotein complex that plays a key role in early embryonic development. In Homo sapiens (Human), this protein is Transducin-like enhancer protein 6.